The chain runs to 395 residues: D-alanine--D-alanine ligase (395 aa).

Positions 172 to 391 constitute an ATP-grasp domain; sequence KVVLGAAGIP…YTELITRLIE (220 aa). Residue 204–266 participates in ATP binding; sequence DAGLTYPLFI…EQGIDGREIE (63 aa). The Mg(2+) site is built by D345, E358, and N360.

This sequence belongs to the D-alanine--D-alanine ligase family. The cofactor is Mg(2+). It depends on Mn(2+) as a cofactor.

It localises to the cytoplasm. It carries out the reaction 2 D-alanine + ATP = D-alanyl-D-alanine + ADP + phosphate + H(+). It functions in the pathway cell wall biogenesis; peptidoglycan biosynthesis. In terms of biological role, cell wall formation. This is D-alanine--D-alanine ligase from Bifidobacterium longum subsp. infantis (strain ATCC 15697 / DSM 20088 / JCM 1222 / NCTC 11817 / S12).